The primary structure comprises 421 residues: Serine hydroxymethyltransferase (421 aa).

Residues Leu-121 and 125–127 (GHL) each bind (6S)-5,6,7,8-tetrahydrofolate. Lys-230 carries the N6-(pyridoxal phosphate)lysine modification. 355-357 (SPF) is a (6S)-5,6,7,8-tetrahydrofolate binding site.

It belongs to the SHMT family. Homodimer. It depends on pyridoxal 5'-phosphate as a cofactor.

It localises to the cytoplasm. The enzyme catalyses (6R)-5,10-methylene-5,6,7,8-tetrahydrofolate + glycine + H2O = (6S)-5,6,7,8-tetrahydrofolate + L-serine. Its pathway is one-carbon metabolism; tetrahydrofolate interconversion. It functions in the pathway amino-acid biosynthesis; glycine biosynthesis; glycine from L-serine: step 1/1. In terms of biological role, catalyzes the reversible interconversion of serine and glycine with tetrahydrofolate (THF) serving as the one-carbon carrier. This reaction serves as the major source of one-carbon groups required for the biosynthesis of purines, thymidylate, methionine, and other important biomolecules. Also exhibits THF-independent aldolase activity toward beta-hydroxyamino acids, producing glycine and aldehydes, via a retro-aldol mechanism. In Psychromonas ingrahamii (strain DSM 17664 / CCUG 51855 / 37), this protein is Serine hydroxymethyltransferase.